Reading from the N-terminus, the 112-residue chain is T cell receptor alpha variable 30 (112 aa).

The N-terminal stretch at 1 to 21 (METLLKVLSGTLLWQLTWVRS) is a signal peptide. Residues 24-112 (PVQSPQAVIL…YSGTYFCGTE (89 aa)) enclose the Ig-like domain. A glycan (N-linked (GlcNAc...) asparagine) is linked at asparagine 42. Cysteine 43 and cysteine 109 are oxidised to a cystine.

Alpha-beta TR is a heterodimer composed of an alpha and beta chain; disulfide-linked. The alpha-beta TR is associated with the transmembrane signaling CD3 coreceptor proteins to form the TR-CD3 (TcR or TCR). The assembly of alpha-beta TR heterodimers with CD3 occurs in the endoplasmic reticulum where a single alpha-beta TR heterodimer associates with one CD3D-CD3E heterodimer, one CD3G-CD3E heterodimer and one CD247 homodimer forming a stable octameric structure. CD3D-CD3E and CD3G-CD3E heterodimers preferentially associate with TR alpha and TR beta chains, respectively. The association of the CD247 homodimer is the last step of TcR assembly in the endoplasmic reticulum and is required for transport to the cell surface.

The protein localises to the cell membrane. Its function is as follows. V region of the variable domain of T cell receptor (TR) alpha chain that participates in the antigen recognition. Alpha-beta T cell receptors are antigen specific receptors which are essential to the immune response and are present on the cell surface of T lymphocytes. Recognize peptide-major histocompatibility (MH) (pMH) complexes that are displayed by antigen presenting cells (APC), a prerequisite for efficient T cell adaptive immunity against pathogens. Binding of alpha-beta TR to pMH complex initiates TR-CD3 clustering on the cell surface and intracellular activation of LCK that phosphorylates the ITAM motifs of CD3G, CD3D, CD3E and CD247 enabling the recruitment of ZAP70. In turn ZAP70 phosphorylates LAT, which recruits numerous signaling molecules to form the LAT signalosome. The LAT signalosome propagates signal branching to three major signaling pathways, the calcium, the mitogen-activated protein kinase (MAPK) kinase and the nuclear factor NF-kappa-B (NF-kB) pathways, leading to the mobilization of transcription factors that are critical for gene expression and essential for T cell growth and differentiation. The T cell repertoire is generated in the thymus, by V-(D)-J rearrangement. This repertoire is then shaped by intrathymic selection events to generate a peripheral T cell pool of self-MH restricted, non-autoaggressive T cells. Post-thymic interaction of alpha-beta TR with the pMH complexes shapes TR structural and functional avidity. In Homo sapiens (Human), this protein is T cell receptor alpha variable 30.